Reading from the N-terminus, the 169-residue chain is UPF0303 protein BOV_1367 (169 aa).

Belongs to the UPF0303 family.

This chain is UPF0303 protein BOV_1367, found in Brucella ovis (strain ATCC 25840 / 63/290 / NCTC 10512).